A 469-amino-acid chain; its full sequence is Glutamate--tRNA ligase (469 aa).

Residues 11–21 carry the 'HIGH' region motif; the sequence is PSPTGFIHLGN. The segment covering 118–131 has biased composition (basic and acidic residues); sequence GEKPRYDGTWRPEP. A disordered region spans residues 118 to 139; sequence GEKPRYDGTWRPEPGKVLPEPP. A 'KMSKS' region motif is present at residues 243–247; that stretch reads KMSKR. Position 246 (Lys-246) interacts with ATP.

It belongs to the class-I aminoacyl-tRNA synthetase family. Glutamate--tRNA ligase type 1 subfamily. As to quaternary structure, monomer.

It is found in the cytoplasm. The enzyme catalyses tRNA(Glu) + L-glutamate + ATP = L-glutamyl-tRNA(Glu) + AMP + diphosphate. In terms of biological role, catalyzes the attachment of glutamate to tRNA(Glu) in a two-step reaction: glutamate is first activated by ATP to form Glu-AMP and then transferred to the acceptor end of tRNA(Glu). This chain is Glutamate--tRNA ligase, found in Burkholderia pseudomallei (strain 668).